Here is a 64-residue protein sequence, read N- to C-terminus: DNA-binding protein 7 (64 aa).

Residues K5 and K7 each carry the N6-methyllysine modification.

The protein belongs to the 7 kDa DNA-binding/endoribonuclease P2 family. As to quaternary structure, monomer.

The protein resides in the cytoplasm. Can constrain negative DNA supercoils. May be involved in maintaining the integrity of the genome at high temperature. The polypeptide is DNA-binding protein 7 (Sulfurisphaera tokodaii (strain DSM 16993 / JCM 10545 / NBRC 100140 / 7) (Sulfolobus tokodaii)).